Here is a 220-residue protein sequence, read N- to C-terminus: Peptide methionine sulfoxide reductase MsrA (220 aa).

The active site involves cysteine 54.

The protein belongs to the MsrA Met sulfoxide reductase family.

It carries out the reaction L-methionyl-[protein] + [thioredoxin]-disulfide + H2O = L-methionyl-(S)-S-oxide-[protein] + [thioredoxin]-dithiol. It catalyses the reaction [thioredoxin]-disulfide + L-methionine + H2O = L-methionine (S)-S-oxide + [thioredoxin]-dithiol. Its function is as follows. Has an important function as a repair enzyme for proteins that have been inactivated by oxidation. Catalyzes the reversible oxidation-reduction of methionine sulfoxide in proteins to methionine. In Salinispora arenicola (strain CNS-205), this protein is Peptide methionine sulfoxide reductase MsrA.